Here is a 398-residue protein sequence, read N- to C-terminus: uncharacterized protein (398 aa).

A helical membrane pass occupies residues 88–108 (IGFTIGFAIFFILLFLLSNMV).

This sequence to B.megaterium SpoIV.

The protein localises to the cell membrane. This is an uncharacterized protein from Bacillus subtilis (strain 168).